The primary structure comprises 801 residues: MFTHFSTHFHLPSSSSLFFLHPFYKSSSLGAVSFVAKDKEKRCRAISKSRTQEYEGVFQTNVATLKLSEINVEDVIVIDDEEEQDIRVGLVNKIKSILSSLEDGEITISAYDTAWVALVEDVNAISTPQFPSSLEWIAKNQLQDGSWGDSRLFSAHDRIINTLACVIALRSWNMHSEKCDKGMIFFRENLSKLENENEEHMPIGFEVAFPSLLEGARGIKPLMCPNDSPILKNIFEKRDEKLTRIPKEIMHKVPTTLLHSLEGMSGLDWKQLLKLQSQDGSFLFSPSSTAFALMQTKDGNCLKYLNNVVKKFNGGVPNVYPVDLFEHIWVVDRLERLGISRFFRHEIKDCMNYVSKIWSEKGICWARNSNVQDIDDTAMAFRLLRLHGHQVSAHVFKHFERNGEFFCFAGQCTQAVTGMYNLFRASQVLFPGEKILEHAKHFSAKVLKEKREANELIDKWIIMKNLPEEVGYALDMPWYANLDRIETRFYIDQYGAESDVWIGKTLYRMAYVNNNNYLELAKLDYNNCQAQHLIEWNVIQTWYLESRLGEFGLSKRDLLLAYFLATGSIFEPERSHERLAWAKTTALLETIKCYVRNEDLRKDFAKKFNDHIDVRDYSIARRMKRNKTEHELVESLFATIGEISWDVRLSYGHEIGYDMHQCWKKWLSSWQSEGDKCEGEAELLIQIINLCSNHWISEGPSMQSTIQHLLQLTNSICHKLSCYQKDKELKGISCQENITNSEVESKMQELVQMVFQKCPNDIDFNVKNTFFTIAKSFYYAAFCDSRTINFHIAKVLFEKVV.

Lysine 241 contributes to the substrate binding site. Residues aspartate 373 and aspartate 375 each contribute to the Mg(2+) site. The DXDD motif signature appears at 373–376; sequence DIDD. Substrate is bound at residue lysine 459.

This sequence belongs to the terpene synthase family. Requires Mg(2+) as cofactor.

It is found in the plastid. The protein localises to the chloroplast. It catalyses the reaction (2E,6E,10E)-geranylgeranyl diphosphate = ent-copalyl diphosphate. The protein operates within plant hormone biosynthesis; gibberellin biosynthesis. In terms of biological role, catalyzes the conversion of geranylgeranyl diphosphate to the gibberellin precursor ent-copalyl diphosphate. The protein is Ent-copalyl diphosphate synthase, chloroplastic of Pisum sativum (Garden pea).